Here is a 256-residue protein sequence, read N- to C-terminus: Ribonuclease 3-like protein 1 (256 aa).

One can recognise an RNase III domain in the interval 22-168; that stretch reads AEVERALGGY…IVGAVYLDSK (147 aa). Mg(2+) is bound by residues glutamate 65, aspartate 154, and glutamate 157.

Requires Mg(2+) as cofactor. It depends on Mn(2+) as a cofactor.

Functionally, cleaves double-stranded RNA (dsRNA). In Oryza sativa subsp. japonica (Rice), this protein is Ribonuclease 3-like protein 1.